We begin with the raw amino-acid sequence, 283 residues long: Orotidine 5'-phosphate decarboxylase (283 aa).

Lys97 functions as the Proton donor in the catalytic mechanism.

The protein belongs to the OMP decarboxylase family. Type 2 subfamily.

The catalysed reaction is orotidine 5'-phosphate + H(+) = UMP + CO2. It participates in pyrimidine metabolism; UMP biosynthesis via de novo pathway; UMP from orotate: step 2/2. This Clostridium botulinum (strain ATCC 19397 / Type A) protein is Orotidine 5'-phosphate decarboxylase.